We begin with the raw amino-acid sequence, 395 residues long: MLQAILDFYHSTGFYGLNMGSIIMMLVACVFLYLAIAKEFEPLLLVPISFGILLTNLPFAGMMAEPLLEVHEKLSASGAHLYTAHTAEPGGLLYYLFQGDHLGIFPPLIFLGVGAMTDFGPLISNPKSLLLGAAAQFGIFVTFFGAIASGLFTAQEAASIGIIGGADGPTAIFLSSKLAPHLMGPIAVAAYSYMALVPIIQPPIMTALTSETERKIKMSQLRLVSKREKIIFPIVVTILVSLIVPPAATLVGMLMLGNLFRECGVVGRLEDTAKNALINIITIFLGVTVGATATAEAFLKVETLAILGLGIVAFGIGTGSGVLLAKFMNKLSKEPINPLLGSAGVSAVPMAARVSQVVGQKADPTNFLLMHAMGPNVAGVIGSAVSAGVLLSLFG.

A run of 9 helical transmembrane segments spans residues 17–37, 43–63, 103–123, 128–148, 180–200, 230–250, 278–298, 304–324, and 374–394; these read LNMGSIIMMLVACVFLYLAIA, LLLVPISFGILLTNLPFAGMM, GIFPPLIFLGVGAMTDFGPLI, SLLLGAAAQFGIFVTFFGAIA, PHLMGPIAVAAYSYMALVPII, IIFPIVVTILVSLIVPPAATL, INIITIFLGVTVGATATAEAF, LAILGLGIVAFGIGTGSGVLL, and GPNVAGVIGSAVSAGVLLSLF.

This sequence belongs to the GcdB/MmdB/OadB family. The methylmalonyl-CoA decarboxylase is composed of four subunits: the carboxyltransferase alpha subunit (MmdA), the tunnel beta subunit (MmdB), the biotin-containing gamma subunit (MmdC) and the delta subunit (MmdD). In terms of processing, the N-terminus is blocked.

The protein localises to the cell membrane. It carries out the reaction (S)-methylmalonyl-CoA + Na(+)(in) + H(+)(out) = propanoyl-CoA + Na(+)(out) + CO2. Its function is as follows. Tunnel subunit of the sodium ion pump methylmalonyl-CoA decarboxylase, which converts the chemical energy of a decarboxylation reaction into an electrochemical gradient of Na(+) ions across the cytoplasmic membrane, thereby creating a sodium ion motive force that is used for ATP synthesis. The beta subunit catalyzes the decarboxylation of the carboxybiotin carrier protein and the coupled export of Na(+) ions. The sequence is that of Methylmalonyl-CoA decarboxylase subunit beta from Propionigenium modestum.